The primary structure comprises 327 residues: Zinc transport protein ZntB (327 aa).

The Cytoplasmic segment spans residues 1 to 271 (MESFAGKELQ…AMNRRTYTMS (271 aa)). The chain crosses the membrane as a helical span at residues 272–292 (LLAMVFLPTTFLTGLFGVNLG). Topologically, residues 293 to 300 (GIPGGDAP) are periplasmic. The helical transmembrane segment at 301–321 (FGFFTFCLMLVILVGGVAWWL) threads the bilayer. Topologically, residues 322–327 (KRSKWL) are cytoplasmic.

The protein belongs to the CorA metal ion transporter (MIT) (TC 1.A.35) family.

It localises to the cell inner membrane. It carries out the reaction Zn(2+)(out) + H(+)(out) = Zn(2+)(in) + H(+)(in). Zinc transporter. Acts as a Zn(2+):proton symporter, which likely mediates zinc ion uptake. The protein is Zinc transport protein ZntB of Pectobacterium atrosepticum (strain SCRI 1043 / ATCC BAA-672) (Erwinia carotovora subsp. atroseptica).